Reading from the N-terminus, the 430-residue chain is tRNA(Ile)-lysidine synthase (430 aa).

Position 24–29 (24–29 (SGGLDS)) interacts with ATP.

Belongs to the tRNA(Ile)-lysidine synthase family.

It is found in the cytoplasm. It carries out the reaction cytidine(34) in tRNA(Ile2) + L-lysine + ATP = lysidine(34) in tRNA(Ile2) + AMP + diphosphate + H(+). Functionally, ligates lysine onto the cytidine present at position 34 of the AUA codon-specific tRNA(Ile) that contains the anticodon CAU, in an ATP-dependent manner. Cytidine is converted to lysidine, thus changing the amino acid specificity of the tRNA from methionine to isoleucine. The protein is tRNA(Ile)-lysidine synthase of Haemophilus influenzae (strain 86-028NP).